Reading from the N-terminus, the 317-residue chain is Uridine phosphorylase 2 (317 aa).

Phosphate contacts are provided by residues glycine 66, arginine 100, and 144–147 (RIGT). The cysteines at positions 95 and 102 are disulfide-linked. Residues 148–149 (SG) and 223–225 (QGR) contribute to the uridine site.

Belongs to the PNP/UDP phosphorylase family. Homodimer. In terms of tissue distribution, predominantly expressed in kidney.

The catalysed reaction is uridine + phosphate = alpha-D-ribose 1-phosphate + uracil. It carries out the reaction 2'-deoxyuridine + phosphate = 2-deoxy-alpha-D-ribose 1-phosphate + uracil. It functions in the pathway pyrimidine metabolism; UMP biosynthesis via salvage pathway; uracil from uridine (phosphorylase route): step 1/1. Its activity is regulated as follows. A conditional disulfide bridge can form within the protein that dislocates a critical phosphate-coordinating arginine Arg-100 away from the active site, disabling the enzyme. Catalyzes the reversible phosphorylytic cleavage of uridine to uracil and ribose-1-phosphate which can then be utilized as carbon and energy sources or in the rescue of pyrimidine bases for nucleotide synthesis. Shows broad substrate specificity and can also accept deoxyuridine and other analogous compounds. This Homo sapiens (Human) protein is Uridine phosphorylase 2.